Here is a 1117-residue protein sequence, read N- to C-terminus: Zinc finger E-box-binding homeobox 1 (1117 aa).

Disordered stretches follow at residues 1–103 and 122–143; these read MADG…QNHD and APEE…NGTP. The span at 15 to 30 shows a compositional bias: low complexity; that stretch reads PRRNNVTNYNTVVEAN. Serine 31 and serine 33 each carry phosphoserine. The segment at 150 to 173 adopts a C2H2-type 1 zinc-finger fold; sequence LTCPYCDRGYKRFTSLKEHIKYRH. Residues lysine 166 and lysine 175 each participate in a glycyl lysine isopeptide (Lys-Gly) (interchain with G-Cter in SUMO2) cross-link. 2 C2H2-type zinc fingers span residues 180–202 and 220–242; these read FSCS…MTSH and FKCT…LRIH. A C2H2-type 4; atypical zinc finger spans residues 248–272; it reads YECPNCKKRFSHSGSYSSHISSKKC. Residues 278 to 307 form a disordered region; that stretch reads VNGRPRSGLKTSQCSSPSLSTSPGSPTRPQ. Lysine 287 participates in a covalent cross-link: Glycyl lysine isopeptide (Lys-Gly) (interchain with G-Cter in SUMO2). The segment covering 288–304 has biased composition (low complexity); sequence TSQCSSPSLSTSPGSPT. 2 positions are modified to phosphoserine: serine 293 and serine 302. Residues lysine 311 and lysine 315 each participate in a glycyl lysine isopeptide (Lys-Gly) (interchain with G-Cter in SUMO2) cross-link. Residue lysine 327 forms a Glycyl lysine isopeptide (Lys-Gly) (interchain with G-Cter in SUMO); alternate linkage. Lysine 327 is covalently cross-linked (Glycyl lysine isopeptide (Lys-Gly) (interchain with G-Cter in SUMO2); alternate). Residues lysine 419, lysine 473, lysine 484, lysine 495, and lysine 528 each participate in a glycyl lysine isopeptide (Lys-Gly) (interchain with G-Cter in SUMO2) cross-link. Disordered regions lie at residues 476–501, 528–566, and 613–687; these read IPAP…TDKS, KHYD…SQPP, and GQIP…SPLN. Residues 484 to 501 show a composition bias toward basic and acidic residues; that stretch reads KSEKLPEDLTVKSETDKS. Positions 559–618 form a DNA-binding region, homeobox; atypical; sequence DLSPSQPPLKNLLSLLKAYYALNAQPSTEELSKIADSVNLPLDGVKKWFEKMQAGQIPGQ. Serine 657, serine 664, serine 671, and serine 678 each carry phosphoserine. Positions 673–687 are enriched in polar residues; that stretch reads MNGSRSCTSSPSPLN. A Phosphothreonine modification is found at threonine 680. Serine 682 is modified (phosphoserine). A Glycyl lysine isopeptide (Lys-Gly) (interchain with G-Cter in SUMO); alternate cross-link involves residue lysine 752. Lysine 752 participates in a covalent cross-link: Glycyl lysine isopeptide (Lys-Gly) (interchain with G-Cter in SUMO2); alternate. Residues 834–876 form a disordered region; it reads PPVKVIQPNGNQDERQDTSSEGVSTVEDQNDSDSTPPKKKTRK. Polar residues predominate over residues 852-868; sequence SSEGVSTVEDQNDSDST. 2 consecutive C2H2-type zinc fingers follow at residues 882 to 904 and 910 to 932; these read YACD…KYEH and HECG…MRLH. The segment at 938–959 adopts a C2H2-type 7; atypical zinc-finger fold; the sequence is YQCDKCGKRFSHSGSYSQHMNH. The segment at 991–1117 is disordered; it reads EHVGARASPS…QLSEEKTNEA (127 aa). 3 stretches are compositionally biased toward acidic residues: residues 1013–1032, 1042–1069, and 1098–1109; these read EEDE…MEEL, QGEE…DEAE, and SEMESESESEQL.

Belongs to the delta-EF1/ZFH-1 C2H2-type zinc-finger family. In terms of assembly, interacts (via N-terminus) with SMARCA4/BRG1. Post-translationally, ubiquitinated, leading to degradation in a proteasome-dependent manner. Deubiquitinated by USP51, leading to stabilization. In terms of tissue distribution, expressed in the external germinal layer (EGL) and internal granular layer (IGL) of the cerebellum (at protein level).

It localises to the nucleus. In terms of biological role, acts as a transcriptional repressor. Binds to E-box sequences in the immunoglobulin heavy chain enhancer as well as in the regulatory regions of many other tissue-specific genes. Represses E-cadherin promoter and induces an epithelial-mesenchymal transition (EMT) by recruiting SMARCA4/BRG1. Represses BCL6 transcription in the presence of the corepressor CTBP1. Positively regulates neuronal differentiation. Represses RCOR1 transcription activation during neurogenesis. Represses transcription by binding to the E box (5'-CANNTG-3'). In the absence of TGFB1, acts as a repressor of COL1A2 transcription via binding to the E-box in the upstream enhancer region. Promotes tumorigenicity by repressing stemness-inhibiting microRNAs. In Mus musculus (Mouse), this protein is Zinc finger E-box-binding homeobox 1.